Here is a 481-residue protein sequence, read N- to C-terminus: 7-deoxyloganetin glucosyltransferase (481 aa).

Catalysis depends on histidine 22, which acts as the Proton acceptor. Histidine 22 is an an anthocyanidin binding site. Aspartate 126 serves as the catalytic Charge relay. UDP-alpha-D-glucose is bound by residues threonine 148, glutamine 363, histidine 378, tryptophan 381, asparagine 382, serine 383, and glutamate 386. Alanine 401 contacts an anthocyanidin. The UDP-alpha-D-glucose site is built by glutamate 402 and glutamine 403.

It belongs to the UDP-glycosyltransferase family. Ubiquitous. Very low expression in stems.

The catalysed reaction is 7-deoxyloganetin + UDP-alpha-D-glucose = 7-deoxyloganin + UDP + H(+). In terms of biological role, iridoid glucosyltransferase acting on genipin and 7-deoxyloganetin. No activity with 7-deoxyloganetic acid. Involved in geniposide biosynthesis. The sequence is that of 7-deoxyloganetin glucosyltransferase (UGT85A24) from Gardenia jasminoides (Cape jasmine).